The primary structure comprises 152 residues: NAD(P)H-quinone oxidoreductase subunit N (152 aa).

The protein belongs to the complex I NdhN subunit family. In terms of assembly, NDH-1 can be composed of about 15 different subunits; different subcomplexes with different compositions have been identified which probably have different functions.

It is found in the cellular thylakoid membrane. The catalysed reaction is a plastoquinone + NADH + (n+1) H(+)(in) = a plastoquinol + NAD(+) + n H(+)(out). It catalyses the reaction a plastoquinone + NADPH + (n+1) H(+)(in) = a plastoquinol + NADP(+) + n H(+)(out). Its function is as follows. NDH-1 shuttles electrons from an unknown electron donor, via FMN and iron-sulfur (Fe-S) centers, to quinones in the respiratory and/or the photosynthetic chain. The immediate electron acceptor for the enzyme in this species is believed to be plastoquinone. Couples the redox reaction to proton translocation, and thus conserves the redox energy in a proton gradient. Cyanobacterial NDH-1 also plays a role in inorganic carbon-concentration. This chain is NAD(P)H-quinone oxidoreductase subunit N, found in Prochlorococcus marinus (strain SARG / CCMP1375 / SS120).